The sequence spans 274 residues: 4-diphosphocytidyl-2-C-methyl-D-erythritol kinase (274 aa).

Residue K14 is part of the active site. 94–104 provides a ligand contact to ATP; that stretch reads PMQAGLGGGSS. D134 is a catalytic residue.

This sequence belongs to the GHMP kinase family. IspE subfamily.

The catalysed reaction is 4-CDP-2-C-methyl-D-erythritol + ATP = 4-CDP-2-C-methyl-D-erythritol 2-phosphate + ADP + H(+). The protein operates within isoprenoid biosynthesis; isopentenyl diphosphate biosynthesis via DXP pathway; isopentenyl diphosphate from 1-deoxy-D-xylulose 5-phosphate: step 3/6. Catalyzes the phosphorylation of the position 2 hydroxy group of 4-diphosphocytidyl-2C-methyl-D-erythritol. This Thermosipho melanesiensis (strain DSM 12029 / CIP 104789 / BI429) protein is 4-diphosphocytidyl-2-C-methyl-D-erythritol kinase.